Consider the following 156-residue polypeptide: Small ribosomal subunit protein eS10 (156 aa).

The disordered stretch occupies residues 91–156 (LKRQTRPEAA…FGRGRQEQEE (66 aa)). Residues 95–119 (TRPEAARPRPKEGAPRAQVGEDRAG) are compositionally biased toward basic and acidic residues.

Belongs to the eukaryotic ribosomal protein eS10 family.

The protein resides in the cytoplasm. The chain is Small ribosomal subunit protein eS10 (RPS10) from Lumbricus rubellus (Humus earthworm).